The primary structure comprises 65 residues: MPQLDTSTWLTTILSMFLALFIIFQLKISKHNFYHNPELTTKVLKQNTPWETKWTKIYLPLLLPL.

The helical transmembrane segment at 8-24 threads the bilayer; the sequence is TWLTTILSMFLALFIIF. The residue at position 53 (Lys-53) is an N6-acetyllysine; alternate. An N6-succinyllysine; alternate modification is found at Lys-53. N6-acetyllysine is present on Lys-56.

The protein belongs to the ATPase protein 8 family. As to quaternary structure, component of the ATP synthase complex composed at least of ATP5F1A/subunit alpha, ATP5F1B/subunit beta, ATP5MC1/subunit c (homooctomer), MT-ATP6/subunit a, MT-ATP8/subunit 8, ATP5ME/subunit e, ATP5MF/subunit f, ATP5MG/subunit g, ATP5MK/subunit k, ATP5MJ/subunit j, ATP5F1C/subunit gamma, ATP5F1D/subunit delta, ATP5F1E/subunit epsilon, ATP5PF/subunit F6, ATP5PB/subunit b, ATP5PD/subunit d, ATP5PO/subunit OSCP. ATP synthase complex consists of a soluble F(1) head domain (subunits alpha(3) and beta(3)) - the catalytic core - and a membrane F(0) domain - the membrane proton channel (subunits c, a, 8, e, f, g, k and j). These two domains are linked by a central stalk (subunits gamma, delta, and epsilon) rotating inside the F1 region and a stationary peripheral stalk (subunits F6, b, d, and OSCP). Interacts with PRICKLE3.

The protein localises to the mitochondrion membrane. Subunit 8, of the mitochondrial membrane ATP synthase complex (F(1)F(0) ATP synthase or Complex V) that produces ATP from ADP in the presence of a proton gradient across the membrane which is generated by electron transport complexes of the respiratory chain. ATP synthase complex consist of a soluble F(1) head domain - the catalytic core - and a membrane F(1) domain - the membrane proton channel. These two domains are linked by a central stalk rotating inside the F(1) region and a stationary peripheral stalk. During catalysis, ATP synthesis in the catalytic domain of F(1) is coupled via a rotary mechanism of the central stalk subunits to proton translocation. In vivo, can only synthesize ATP although its ATP hydrolase activity can be activated artificially in vitro. Part of the complex F(0) domain. The chain is ATP synthase F(0) complex subunit 8 from Capra ibex ibex (Alpine ibex).